The primary structure comprises 419 residues: Murein hydrolase activator EnvC (419 aa).

An N-terminal signal peptide occupies residues 1–34; the sequence is MTRAVKPRRFAIRPIIYASVLSAGVLLCAFSAHA. Coiled-coil stretches lie at residues 35 to 124 and 155 to 271; these read DERD…LDAA and LNQA…ATRK. Basic and acidic residues predominate over residues 252 to 270; that stretch reads EREAREAQAVRDRQKEATR. The tract at residues 252-290 is disordered; that stretch reads EREAREAQAVRDRQKEATRKGTTYKPTESEKSLMSRTGG.

The protein belongs to the peptidase M23B family.

The protein localises to the periplasm. In terms of biological role, activator of the cell wall hydrolases AmiA and AmiB. Required for septal murein cleavage and daughter cell separation during cell division. In vitro, exhibits weak endoproteolytic activity on beta-casein. In Escherichia coli (strain K12), this protein is Murein hydrolase activator EnvC (envC).